The chain runs to 108 residues: Alkyltransferase-like protein 1 (108 aa).

It belongs to the MGMT family. ATL subfamily.

Involved in DNA damage recognition. Binds DNA containing O(6)-methylguanine and larger O(6)-alkylguanine adducts. The DNA is bent, the damaged base is rotated out of the DNA duplex into a hydrophobic binding pocket (nucleotide flipping), with Arg-39 donating a hydrogen bond to the orphaned cytosine to stabilize the extrahelical DNA conformation. This structural change in DNA presents the lesion to the nucleotide excision repair (NER) pathway. The affinity for O(6)-alkylguanine adducts increases with the size of the alkyl group. Low affinity small O(6)-alkylguanines are directed to the global genome repair pathway of NER via rhp7-rhp16 and rhp41-rhp23, while strong binding to bulky O(6)-alkylguanines stalls the transcription machinery and diverts the damage to the transcription-coupled repair pathway of NER via rhp26. This is Alkyltransferase-like protein 1 from Schizosaccharomyces pombe (strain 972 / ATCC 24843) (Fission yeast).